The chain runs to 398 residues: 4-hydroxy-3-methylbut-2-enyl diphosphate reductase (398 aa).

C66 contacts [4Fe-4S] cluster. H96 contacts (2E)-4-hydroxy-3-methylbut-2-enyl diphosphate. H96 is a binding site for dimethylallyl diphosphate. Residue H96 participates in isopentenyl diphosphate binding. C157 lines the [4Fe-4S] cluster pocket. (2E)-4-hydroxy-3-methylbut-2-enyl diphosphate is bound at residue H185. A dimethylallyl diphosphate-binding site is contributed by H185. H185 contacts isopentenyl diphosphate. The Proton donor role is filled by E187. T250 is a (2E)-4-hydroxy-3-methylbut-2-enyl diphosphate binding site. Position 288 (C288) interacts with [4Fe-4S] cluster. Residues S317, S318, N319, and S379 each coordinate (2E)-4-hydroxy-3-methylbut-2-enyl diphosphate. The dimethylallyl diphosphate site is built by S317, S318, N319, and S379. Isopentenyl diphosphate contacts are provided by S317, S318, N319, and S379.

The protein belongs to the IspH family. The cofactor is [4Fe-4S] cluster.

The enzyme catalyses isopentenyl diphosphate + 2 oxidized [2Fe-2S]-[ferredoxin] + H2O = (2E)-4-hydroxy-3-methylbut-2-enyl diphosphate + 2 reduced [2Fe-2S]-[ferredoxin] + 2 H(+). It carries out the reaction dimethylallyl diphosphate + 2 oxidized [2Fe-2S]-[ferredoxin] + H2O = (2E)-4-hydroxy-3-methylbut-2-enyl diphosphate + 2 reduced [2Fe-2S]-[ferredoxin] + 2 H(+). The protein operates within isoprenoid biosynthesis; dimethylallyl diphosphate biosynthesis; dimethylallyl diphosphate from (2E)-4-hydroxy-3-methylbutenyl diphosphate: step 1/1. It functions in the pathway isoprenoid biosynthesis; isopentenyl diphosphate biosynthesis via DXP pathway; isopentenyl diphosphate from 1-deoxy-D-xylulose 5-phosphate: step 6/6. Functionally, catalyzes the conversion of 1-hydroxy-2-methyl-2-(E)-butenyl 4-diphosphate (HMBPP) into a mixture of isopentenyl diphosphate (IPP) and dimethylallyl diphosphate (DMAPP). Acts in the terminal step of the DOXP/MEP pathway for isoprenoid precursor biosynthesis. The sequence is that of 4-hydroxy-3-methylbut-2-enyl diphosphate reductase from Synechococcus sp. (strain CC9311).